A 55-amino-acid polypeptide reads, in one-letter code: Large ribosomal subunit protein bL33 (55 aa).

This sequence belongs to the bacterial ribosomal protein bL33 family.

The chain is Large ribosomal subunit protein bL33 from Arthrobacter sp. (strain FB24).